Reading from the N-terminus, the 321-residue chain is Calcium-regulated beta-propeller protein CarP (321 aa).

A signal peptide spans 1–42 (MTIHAQTPEPFSMSRAFTPRRLLLAVLLVALSALVLLGQSFR).

The protein belongs to the YjiK family.

It is found in the cell inner membrane. Its function is as follows. Plays a role in intracellular Ca(2+) homeostasis. Involved in modulating Ca(2+)-induced swarming motility and pyocyanine production. Plays a role in regulating virulence in a Ca(2+)-dependent manner. Involved in cell protection against oxidative stress in the presence of elevated Ca(2+). The chain is Calcium-regulated beta-propeller protein CarP from Pseudomonas aeruginosa (strain ATCC 15692 / DSM 22644 / CIP 104116 / JCM 14847 / LMG 12228 / 1C / PRS 101 / PAO1).